We begin with the raw amino-acid sequence, 546 residues long: Elongator complex protein 3 (546 aa).

Positions 81-371 (RTASGIAVVA…YRVQRDIPMP (291 aa)) constitute a Radical SAM core domain. Positions 98, 108, and 111 each coordinate [4Fe-4S] cluster. Residues Lys-163, 473-476 (ELHV), 496-498 (FGM), and Tyr-529 each bind acetyl-CoA. Positions 395 to 546 (TQCRDVRTRE…EGPYMVKRLQ (152 aa)) constitute an N-acetyltransferase domain.

This sequence belongs to the ELP3 family. As to quaternary structure, component of the elongator complex. Requires [4Fe-4S] cluster as cofactor.

It localises to the cytoplasm. The protein localises to the nucleus. It catalyses the reaction uridine(34) in tRNA + acetyl-CoA + S-adenosyl-L-methionine + H2O = 5-(carboxymethyl)uridine(34) in tRNA + 5'-deoxyadenosine + L-methionine + CoA + 2 H(+). The protein operates within tRNA modification; 5-methoxycarbonylmethyl-2-thiouridine-tRNA biosynthesis. Functionally, catalytic tRNA acetyltransferase subunit of the elongator complex which is required for multiple tRNA modifications, including mcm5U (5-methoxycarbonylmethyl uridine), mcm5s2U (5-methoxycarbonylmethyl-2-thiouridine), and ncm5U (5-carbamoylmethyl uridine). In the elongator complex, acts as a tRNA uridine(34) acetyltransferase by mediating formation of carboxymethyluridine in the wobble base at position 34 in tRNAs. The polypeptide is Elongator complex protein 3 (Gallus gallus (Chicken)).